Here is a 109-residue protein sequence, read N- to C-terminus: Cell division suppressor protein YneA (109 aa).

The 52-residue stretch at 39 to 90 (SEVNVNEGDSLWALADQYAGKSDMAKADFVSWVEKENNLSDGHVEAGDSVVI) folds into the LysM domain.

The protein belongs to the YneA family.

It localises to the cytoplasm. Inhibits cell division during the SOS response. Affects a later stage of the cell division protein assembly, after the assembly of the Z ring, by probably suppressing recruitment of FtsL and/or DivIC to the division machinery. The chain is Cell division suppressor protein YneA from Listeria monocytogenes serovar 1/2a (strain ATCC BAA-679 / EGD-e).